Here is a 488-residue protein sequence, read N- to C-terminus: 7,8-epoxymelianol synthase CYP88A51 (488 aa).

The helical transmembrane segment at 4-24 (NFLWPMLAMFLGSLVVMFGFL) threads the bilayer. Cysteine 436 serves as a coordination point for heme.

The protein belongs to the cytochrome P450 family. The cofactor is heme. Accumulates in mature fruits and in juice vesicles.

It is found in the membrane. The catalysed reaction is melianol + reduced [NADPH--hemoprotein reductase] + O2 = 7,8-epoxymelianol + oxidized [NADPH--hemoprotein reductase] + H2O + H(+). It functions in the pathway secondary metabolite biosynthesis; terpenoid biosynthesis. Functionally, monooxygenase involved in the biosynthesis of limonoids triterpene natural products such as limonin, a compound with insecticidal activity responsible for the bitter taste in citrus. Catalyzes the epoxidation of melianol to produce 7,8-epoxymelianol. The chain is 7,8-epoxymelianol synthase CYP88A51 from Citrus sinensis (Sweet orange).